Reading from the N-terminus, the 128-residue chain is Sulfurtransferase TusD (128 aa).

Cys-78 acts as the Cysteine persulfide intermediate in catalysis.

The protein belongs to the DsrE/TusD family. In terms of assembly, heterohexamer, formed by a dimer of trimers. The hexameric TusBCD complex contains 2 copies each of TusB, TusC and TusD. The TusBCD complex interacts with TusE.

The protein localises to the cytoplasm. Part of a sulfur-relay system required for 2-thiolation of 5-methylaminomethyl-2-thiouridine (mnm(5)s(2)U) at tRNA wobble positions. Accepts sulfur from TusA and transfers it in turn to TusE. The protein is Sulfurtransferase TusD of Enterobacter sp. (strain 638).